We begin with the raw amino-acid sequence, 293 residues long: Elongation factor Ts (293 aa).

The involved in Mg(2+) ion dislocation from EF-Tu stretch occupies residues Thr80–Val83.

This sequence belongs to the EF-Ts family.

Its subcellular location is the cytoplasm. Functionally, associates with the EF-Tu.GDP complex and induces the exchange of GDP to GTP. It remains bound to the aminoacyl-tRNA.EF-Tu.GTP complex up to the GTP hydrolysis stage on the ribosome. This chain is Elongation factor Ts, found in Enterococcus faecalis (strain ATCC 700802 / V583).